We begin with the raw amino-acid sequence, 274 residues long: NADPH-dependent 7-cyano-7-deazaguanine reductase (274 aa).

Positions 1–33 (MPKKDALDHLSLGQHTDYPNEYDPKQLQPVPRS) are disordered. Residue 84-86 (IES) participates in substrate binding. 86–87 (SK) lines the NADPH pocket. Cysteine 183 functions as the Thioimide intermediate in the catalytic mechanism. Aspartate 190 acts as the Proton donor in catalysis. 222–223 (HE) contributes to the substrate binding site. Position 250-251 (250-251 (RG)) interacts with NADPH.

This sequence belongs to the GTP cyclohydrolase I family. QueF type 2 subfamily. As to quaternary structure, homodimer.

It localises to the cytoplasm. The enzyme catalyses 7-aminomethyl-7-carbaguanine + 2 NADP(+) = 7-cyano-7-deazaguanine + 2 NADPH + 3 H(+). It functions in the pathway tRNA modification; tRNA-queuosine biosynthesis. In terms of biological role, catalyzes the NADPH-dependent reduction of 7-cyano-7-deazaguanine (preQ0) to 7-aminomethyl-7-deazaguanine (preQ1). This is NADPH-dependent 7-cyano-7-deazaguanine reductase from Idiomarina loihiensis (strain ATCC BAA-735 / DSM 15497 / L2-TR).